The sequence spans 768 residues: WD repeat-containing protein 20 homolog (768 aa).

The tract at residues E103–P122 is disordered. WD repeat units follow at residues I224 to N264, I302 to V342, S345 to R384, and C454 to G497. Residues V531–N608 are disordered. A compositionally biased stretch (polar residues) spans N539–T553. The segment covering F570–S582 has biased composition (low complexity). The segment covering N595 to N608 has biased composition (polar residues). A WD 5 repeat occupies V646–R683. Residues D684–V749 form a disordered region. The segment covering S688–G712 has biased composition (polar residues). A compositionally biased stretch (low complexity) spans S724–S733. Positions E734 to V749 are enriched in polar residues.

As to quaternary structure, interacts with usp-46; the interaction increases the catalytic activity of usp-46 in the presence of wdr-48. In terms of tissue distribution, expressed in several neurons in the head and tail.

Its function is as follows. Together with wdr-48, binds to and stimulates the activity of the deubiquitinating enzyme usp-46, leading to deubiquitination and stabilization of the glr-1 glutamate receptor. This Caenorhabditis elegans protein is WD repeat-containing protein 20 homolog.